A 311-amino-acid polypeptide reads, in one-letter code: Tryptophan 2,3-dioxygenase (311 aa).

Residues 1–37 are disordered; it reads MQPPGGDAPAGCPFSGARAAQPAQAAHEAPHVPGEAD. Positions 17 to 27 are enriched in low complexity; the sequence is ARAAQPAQAAH. Residues 80-84, tyrosine 142, and arginine 146 each bind substrate; that span reads FIIQH. Histidine 269 is a heme binding site. Residue threonine 283 participates in substrate binding.

The protein belongs to the tryptophan 2,3-dioxygenase family. In terms of assembly, homotetramer. The cofactor is heme.

The enzyme catalyses L-tryptophan + O2 = N-formyl-L-kynurenine. The protein operates within amino-acid degradation; L-tryptophan degradation via kynurenine pathway; L-kynurenine from L-tryptophan: step 1/2. Its function is as follows. Heme-dependent dioxygenase that catalyzes the oxidative cleavage of the L-tryptophan (L-Trp) pyrrole ring and converts L-tryptophan to N-formyl-L-kynurenine. Catalyzes the oxidative cleavage of the indole moiety. The protein is Tryptophan 2,3-dioxygenase of Burkholderia orbicola (strain MC0-3).